The sequence spans 70 residues: Cold shock-like protein CspH (70 aa).

Residues 7 to 67 (GIVKTFDRKS…GLRGPTAANV (61 aa)) enclose the CSD domain.

The protein resides in the cytoplasm. In Escherichia coli O6:H1 (strain CFT073 / ATCC 700928 / UPEC), this protein is Cold shock-like protein CspH (cspH).